Here is a 403-residue protein sequence, read N- to C-terminus: E2F transcription factor-like E2FE (403 aa).

Residues 34–99 mediate DNA binding; the sequence is RKQKSLGLLC…RAKNQYTWKG (66 aa). Residues 128–167 are disordered; that stretch reads VKGSDDEDDDEESSQPHSSSQTDSSKPGSLPQSSDPSKID. The span at 142-152 shows a compositional bias: low complexity; the sequence is QPHSSSQTDSS. A compositionally biased stretch (polar residues) spans 153 to 163; the sequence is KPGSLPQSSDP. The DNA-binding element occupies 169 to 250; that stretch reads RREKSLGLLT…SRKPAFKWLG (82 aa). Residues 282–319 form a disordered region; the sequence is VKRSKSSSSSQENATERRLKMKKHSTPESSYNKSFDVH.

This sequence belongs to the E2F/DP family. As to expression, expressed exclusively in mitotically dividing cells. Highly expressed in young leaves and mature flowers. Lower expression in young stalk and in young and mature flowers.

Its subcellular location is the nucleus. Inhibitor of E2F-dependent activation of gene expression. Binds specifically the E2 recognition site without interacting with DP proteins and prevents transcription activation by E2F/DP heterodimers. Controls the timing of endocycle onset and inhibits endoreduplication. The chain is E2F transcription factor-like E2FE (E2FE) from Arabidopsis thaliana (Mouse-ear cress).